The sequence spans 275 residues: Large ribosomal subunit protein uL2 (275 aa).

The segment at 222-275 is disordered; the sequence is GKVMNPVDHPHGGGEGRNPIGRNPSTPWGKLAMGVKTRGNKKSDRLIVKRRNKK.

This sequence belongs to the universal ribosomal protein uL2 family. In terms of assembly, part of the 50S ribosomal subunit. Forms a bridge to the 30S subunit in the 70S ribosome.

In terms of biological role, one of the primary rRNA binding proteins. Required for association of the 30S and 50S subunits to form the 70S ribosome, for tRNA binding and peptide bond formation. It has been suggested to have peptidyltransferase activity; this is somewhat controversial. Makes several contacts with the 16S rRNA in the 70S ribosome. This is Large ribosomal subunit protein uL2 from Desulforamulus reducens (strain ATCC BAA-1160 / DSM 100696 / MI-1) (Desulfotomaculum reducens).